An 83-amino-acid chain; its full sequence is Putative beta-neurotoxin RjAa10f (83 aa).

A signal peptide spans 1 to 18 (MKILIFIIASFMLIGVWC). In terms of domain architecture, LCN-type CS-alpha/beta spans 19 to 82 (KEGYPMGRDG…VWDPNNNKCV (64 aa)). Intrachain disulfides connect C29–C81, C33–C55, C40–C62, and C44–C64.

It belongs to the long (4 C-C) scorpion toxin superfamily. Sodium channel inhibitor family. Beta subfamily. As to expression, expressed by the venom gland.

Its subcellular location is the secreted. Functionally, beta toxins bind voltage-independently at site-4 of sodium channels (Nav) and shift the voltage of activation toward more negative potentials thereby affecting sodium channel activation and promoting spontaneous and repetitive firing. The polypeptide is Putative beta-neurotoxin RjAa10f (Rhopalurus junceus (Caribbean blue scorpion)).